Reading from the N-terminus, the 427-residue chain is Flotillin-1 (427 aa).

Phosphoserine is present on residues serine 19, serine 163, and serine 385. At threonine 387 the chain carries Phosphothreonine.

This sequence belongs to the band 7/mec-2 family. Flotillin subfamily. Heterooligomeric complex of flotillin-1 and flotillin-2 and caveolin-1 and caveolin-2. Interacts with ECPAS.

It is found in the cell membrane. Its subcellular location is the endosome. It localises to the membrane. The protein resides in the caveola. The protein localises to the melanosome. It is found in the membrane raft. Its function is as follows. May act as a scaffolding protein within caveolar membranes, functionally participating in formation of caveolae or caveolae-like vesicles. This chain is Flotillin-1 (FLOT1), found in Homo sapiens (Human).